The following is a 276-amino-acid chain: Secretagogin (276 aa).

6 consecutive EF-hand domains span residues 12–47, 58–93, 105–140, 149–184, 197–232, and 240–276; these read LDAA…LLAK, NVQK…EDEN, DNSV…LFLH, ELEE…QENF, ERKR…MMEL, and VDLD…KINP. The Ca(2+) site is built by Asp-25, Tyr-31, Glu-36, Ser-73, Glu-75, Arg-77, Glu-82, Asp-118, Asp-120, Ser-122, Glu-129, Asp-162, Asn-164, Asp-166, Arg-168, Asp-173, Asp-210, Ser-212, Thr-214, Glu-221, Asp-254, Asn-256, Asp-258, Lys-260, and Glu-265.

The protein resides in the cytoplasm. It is found in the secreted. It localises to the cytoplasmic vesicle. The protein localises to the secretory vesicle membrane. This is Secretagogin (Scgn) from Mus musculus (Mouse).